Here is a 245-residue protein sequence, read N- to C-terminus: Rhamnogalacturonan acetylesterase (245 aa).

A signal peptide spans 1 to 17 (MKSIALTSLSLLPSALA). The Nucleophile role is filled by Ser-26. Cys-100 and Cys-108 are oxidised to a cystine. Catalysis depends on residues Asp-204 and His-207. Cys-226 and Cys-244 are disulfide-bonded.

It belongs to the 'GDSL' lipolytic enzyme family.

Its subcellular location is the secreted. It catalyses the reaction Hydrolytic cleavage of 2-O-acetyl- or 3-O-acetyl groups of alpha-D-galacturonic acid in rhamnogalacturonan I.. Functionally, plays a key role in the degradation of rhamnogalacturonan in the cell wall. Involved in degradation of pectin. This Emericella nidulans (strain FGSC A4 / ATCC 38163 / CBS 112.46 / NRRL 194 / M139) (Aspergillus nidulans) protein is Rhamnogalacturonan acetylesterase.